The sequence spans 200 residues: Small ribosomal subunit protein mS26 (200 aa).

A mitochondrion-targeting transit peptide spans 1-27; the sequence is MLRALNRLAARPETRPPTPLLLPVRGR. Positions 1 to 44 are disordered; it reads MLRALNRLAARPETRPPTPLLLPVRGRKTRHDPPAKSKVGRVQT. Lysine 159 bears the N6-acetyllysine mark.

This sequence belongs to the mitochondrion-specific ribosomal protein mS26 family. Component of the mitochondrial ribosome small subunit (28S) which comprises a 12S rRNA and about 30 distinct proteins.

The protein resides in the mitochondrion. The protein is Small ribosomal subunit protein mS26 (Mrps26) of Mus musculus (Mouse).